The chain runs to 176 residues: Nuclear ribonuclease Z (176 aa).

Belongs to the RNase Z family. In terms of assembly, homodimer. The cofactor is Zn(2+).

The protein localises to the nucleus. It carries out the reaction Endonucleolytic cleavage of RNA, removing extra 3' nucleotides from tRNA precursor, generating 3' termini of tRNAs. A 3'-hydroxy group is left at the tRNA terminus and a 5'-phosphoryl group is left at the trailer molecule.. Functionally, zinc phosphodiesterase, which displays some tRNA 3'-processing endonuclease activity. Probably involved in tRNA maturation, by removing a 3'-trailer from precursor tRNA. This is Nuclear ribonuclease Z (ELAC) from Triticum aestivum (Wheat).